Consider the following 396-residue polypeptide: ATP phosphoribosyltransferase regulatory subunit (396 aa).

The protein belongs to the class-II aminoacyl-tRNA synthetase family. HisZ subfamily. As to quaternary structure, heteromultimer composed of HisG and HisZ subunits.

The protein localises to the cytoplasm. It functions in the pathway amino-acid biosynthesis; L-histidine biosynthesis; L-histidine from 5-phospho-alpha-D-ribose 1-diphosphate: step 1/9. In terms of biological role, required for the first step of histidine biosynthesis. May allow the feedback regulation of ATP phosphoribosyltransferase activity by histidine. This chain is ATP phosphoribosyltransferase regulatory subunit, found in Cellvibrio japonicus (strain Ueda107) (Pseudomonas fluorescens subsp. cellulosa).